Consider the following 56-residue polypeptide: Large ribosomal subunit protein bL32 (56 aa).

A disordered region spans residues 1 to 37 (MAVQQNKPTRSKRGMRRSHDALTAPLLSVDKTSGETH).

The protein belongs to the bacterial ribosomal protein bL32 family.

This chain is Large ribosomal subunit protein bL32, found in Photorhabdus laumondii subsp. laumondii (strain DSM 15139 / CIP 105565 / TT01) (Photorhabdus luminescens subsp. laumondii).